The sequence spans 205 residues: Probable GTP-binding protein EngB (205 aa).

The EngB-type G domain maps to 29-203; the sequence is QGAEIAFIGR…KAVLSQWFRS (175 aa). GTP is bound by residues 37–44, 64–68, 82–85, 149–152, and 182–184; these read GRSNAGKS, GRTQM, DLPG, TKSD, and FSS. Positions 44 and 66 each coordinate Mg(2+).

This sequence belongs to the TRAFAC class TrmE-Era-EngA-EngB-Septin-like GTPase superfamily. EngB GTPase family. Mg(2+) serves as cofactor.

In terms of biological role, necessary for normal cell division and for the maintenance of normal septation. In Coxiella burnetii (strain CbuG_Q212) (Coxiella burnetii (strain Q212)), this protein is Probable GTP-binding protein EngB.